We begin with the raw amino-acid sequence, 103 residues long: Large ribosomal subunit protein uL23 (103 aa).

This sequence belongs to the universal ribosomal protein uL23 family. Part of the 50S ribosomal subunit. Contacts protein L29, and trigger factor when it is bound to the ribosome.

In terms of biological role, one of the early assembly proteins it binds 23S rRNA. One of the proteins that surrounds the polypeptide exit tunnel on the outside of the ribosome. Forms the main docking site for trigger factor binding to the ribosome. This Chlorobaculum tepidum (strain ATCC 49652 / DSM 12025 / NBRC 103806 / TLS) (Chlorobium tepidum) protein is Large ribosomal subunit protein uL23.